Consider the following 366-residue polypeptide: Phospho-N-acetylmuramoyl-pentapeptide-transferase (366 aa).

10 helical membrane-spanning segments follow: residues alanine 27–leucine 47, threonine 71–alanine 91, leucine 93–phenylalanine 113, phenylalanine 138–alanine 158, phenylalanine 174–glycine 194, glycine 205–alanine 225, leucine 245–proline 265, alanine 268–valine 288, isoleucine 294–valine 314, and glutamine 343–leucine 363.

The protein belongs to the glycosyltransferase 4 family. MraY subfamily. The cofactor is Mg(2+).

The protein resides in the cell inner membrane. It catalyses the reaction UDP-N-acetyl-alpha-D-muramoyl-L-alanyl-gamma-D-glutamyl-meso-2,6-diaminopimeloyl-D-alanyl-D-alanine + di-trans,octa-cis-undecaprenyl phosphate = di-trans,octa-cis-undecaprenyl diphospho-N-acetyl-alpha-D-muramoyl-L-alanyl-D-glutamyl-meso-2,6-diaminopimeloyl-D-alanyl-D-alanine + UMP. Its pathway is cell wall biogenesis; peptidoglycan biosynthesis. In terms of biological role, catalyzes the initial step of the lipid cycle reactions in the biosynthesis of the cell wall peptidoglycan: transfers peptidoglycan precursor phospho-MurNAc-pentapeptide from UDP-MurNAc-pentapeptide onto the lipid carrier undecaprenyl phosphate, yielding undecaprenyl-pyrophosphoryl-MurNAc-pentapeptide, known as lipid I. The protein is Phospho-N-acetylmuramoyl-pentapeptide-transferase of Rhizobium johnstonii (strain DSM 114642 / LMG 32736 / 3841) (Rhizobium leguminosarum bv. viciae).